A 360-amino-acid chain; its full sequence is Inward rectifier potassium channel 13 (360 aa).

Topologically, residues 1–50 (MDSSNCKVIAPLLSQRYRRMVTKDGHSTLQMDGAQRGLAYLRDAWGILMD) are cytoplasmic. A helical membrane pass occupies residues 51 to 77 (MRWRWMMLVFSASFVVHWLVFAVLWYV). Topologically, residues 78–105 (LAEMNGDLELDHDAPPENHTICVKYITS) are extracellular. Positions 106–122 (FTAAFSFSLETQLTIGY) form an intramembrane region, helical; Pore-forming. The short motif at 119–124 (TIGYGT) is the Selectivity filter element. Residues 123-131 (GTMFPSGDC) are Extracellular-facing. The helical transmembrane segment at 132-157 (PSAIALLAIQMLLGLMLEAFITGAFV) threads the bilayer. The Cytoplasmic segment spans residues 158–360 (AKIARPKNRA…FQISETGLTE (203 aa)). At Ser201 the chain carries Phosphoserine; by PKC. Ser287 is modified (phosphoserine; by PKA).

Belongs to the inward rectifier-type potassium channel (TC 1.A.2.1) family. KCNJ13 subfamily. As to quaternary structure, homotetramer. Interacts with RAB28; the interaction may facilitate cone outer segments phagocytosis. Post-translationally, phosphorylation at Ser-201 by PKC strongly inhibits ionic currents, while phosphorylation at Ser-287 by PKA increases them. In terms of tissue distribution, predominantly expressed in small intestine. Expression is also detected in stomach, kidney, and all central nervous system regions tested with the exception of spinal cord.

Its subcellular location is the membrane. The protein resides in the cell membrane. The catalysed reaction is K(+)(in) = K(+)(out). Its activity is regulated as follows. Inhibited by Ba(2+) and Cs(+), although sensitivity to those inhibitors is much lower than in other Kir channels. In terms of biological role, inward rectifier potassium channels are characterized by a greater tendency to allow potassium to flow into the cell rather than out of it. Their voltage dependence is regulated by the concentration of extracellular potassium; as external potassium is raised, the voltage range of the channel opening shifts to more positive voltages. The inward rectification is mainly due to the blockage of outward current by internal magnesium. KCNJ13 has a very low single channel conductance, low sensitivity to block by external barium and cesium, and no dependence of its inward rectification properties on the internal blocking particle magnesium. The polypeptide is Inward rectifier potassium channel 13 (KCNJ13) (Homo sapiens (Human)).